The chain runs to 175 residues: Ribosome maturation factor RimM (175 aa).

Positions 95–175 constitute a PRC barrel domain; sequence SEDEFYWREL…RIEVDWDPGF (81 aa).

This sequence belongs to the RimM family. In terms of assembly, binds ribosomal protein uS19.

Its subcellular location is the cytoplasm. Its function is as follows. An accessory protein needed during the final step in the assembly of 30S ribosomal subunit, possibly for assembly of the head region. Essential for efficient processing of 16S rRNA. May be needed both before and after RbfA during the maturation of 16S rRNA. It has affinity for free ribosomal 30S subunits but not for 70S ribosomes. In Aliivibrio salmonicida (strain LFI1238) (Vibrio salmonicida (strain LFI1238)), this protein is Ribosome maturation factor RimM.